The chain runs to 166 residues: Shikimate kinase (166 aa).

11–16 serves as a coordination point for ATP; it reads GSGKST. Residue Ser-15 participates in Mg(2+) binding. Substrate contacts are provided by Asp-33, Arg-57, and Gly-79. Arg-117 contacts ATP. Arg-134 lines the substrate pocket.

It belongs to the shikimate kinase family. In terms of assembly, monomer. The cofactor is Mg(2+).

Its subcellular location is the cytoplasm. The catalysed reaction is shikimate + ATP = 3-phosphoshikimate + ADP + H(+). The protein operates within metabolic intermediate biosynthesis; chorismate biosynthesis; chorismate from D-erythrose 4-phosphate and phosphoenolpyruvate: step 5/7. In terms of biological role, catalyzes the specific phosphorylation of the 3-hydroxyl group of shikimic acid using ATP as a cosubstrate. This is Shikimate kinase from Sulfurihydrogenibium sp. (strain YO3AOP1).